The following is a 453-amino-acid chain: Bifunctional protein GlmU (453 aa).

The segment at 1–225 (MNIVILAAGT…EWETLGVNSK (225 aa)) is pyrophosphorylase. UDP-N-acetyl-alpha-D-glucosamine is bound by residues 6–9 (LAAG), lysine 20, glutamine 71, 76–77 (GT), 98–100 (YGD), glycine 135, glutamate 150, asparagine 165, and asparagine 223. Residue aspartate 100 participates in Mg(2+) binding. Residue asparagine 223 participates in Mg(2+) binding. The linker stretch occupies residues 226–246 (AQLAELERIHQRNVADALLVD). Residues 247 to 453 (GVTLADPARV…GYVRPVKKKS (207 aa)) form an N-acetyltransferase region. The UDP-N-acetyl-alpha-D-glucosamine site is built by arginine 329 and lysine 347. The active-site Proton acceptor is the histidine 359. The UDP-N-acetyl-alpha-D-glucosamine site is built by tyrosine 362 and asparagine 373. Acetyl-CoA-binding positions include alanine 376, 382-383 (NY), serine 401, and alanine 419.

This sequence in the N-terminal section; belongs to the N-acetylglucosamine-1-phosphate uridyltransferase family. The protein in the C-terminal section; belongs to the transferase hexapeptide repeat family. As to quaternary structure, homotrimer. Mg(2+) serves as cofactor.

It is found in the cytoplasm. The catalysed reaction is alpha-D-glucosamine 1-phosphate + acetyl-CoA = N-acetyl-alpha-D-glucosamine 1-phosphate + CoA + H(+). It catalyses the reaction N-acetyl-alpha-D-glucosamine 1-phosphate + UTP + H(+) = UDP-N-acetyl-alpha-D-glucosamine + diphosphate. Its pathway is nucleotide-sugar biosynthesis; UDP-N-acetyl-alpha-D-glucosamine biosynthesis; N-acetyl-alpha-D-glucosamine 1-phosphate from alpha-D-glucosamine 6-phosphate (route II): step 2/2. It participates in nucleotide-sugar biosynthesis; UDP-N-acetyl-alpha-D-glucosamine biosynthesis; UDP-N-acetyl-alpha-D-glucosamine from N-acetyl-alpha-D-glucosamine 1-phosphate: step 1/1. The protein operates within bacterial outer membrane biogenesis; LPS lipid A biosynthesis. In terms of biological role, catalyzes the last two sequential reactions in the de novo biosynthetic pathway for UDP-N-acetylglucosamine (UDP-GlcNAc). The C-terminal domain catalyzes the transfer of acetyl group from acetyl coenzyme A to glucosamine-1-phosphate (GlcN-1-P) to produce N-acetylglucosamine-1-phosphate (GlcNAc-1-P), which is converted into UDP-GlcNAc by the transfer of uridine 5-monophosphate (from uridine 5-triphosphate), a reaction catalyzed by the N-terminal domain. The sequence is that of Bifunctional protein GlmU from Burkholderia orbicola (strain AU 1054).